The following is a 445-amino-acid chain: Gamma-glutamyl phosphate reductase (445 aa).

The protein belongs to the gamma-glutamyl phosphate reductase family.

Its subcellular location is the cytoplasm. The catalysed reaction is L-glutamate 5-semialdehyde + phosphate + NADP(+) = L-glutamyl 5-phosphate + NADPH + H(+). Its pathway is amino-acid biosynthesis; L-proline biosynthesis; L-glutamate 5-semialdehyde from L-glutamate: step 2/2. Its function is as follows. Catalyzes the NADPH-dependent reduction of L-glutamate 5-phosphate into L-glutamate 5-semialdehyde and phosphate. The product spontaneously undergoes cyclization to form 1-pyrroline-5-carboxylate. This Saccharopolyspora erythraea (strain ATCC 11635 / DSM 40517 / JCM 4748 / NBRC 13426 / NCIMB 8594 / NRRL 2338) protein is Gamma-glutamyl phosphate reductase.